The chain runs to 414 residues: MTRFDTIERAVADIAAGKAVVVVDDEDRENEGDLIFAAEKATPELVAFMIRYTSGYICVPLTGEDCDRLGLPPMYATNQDKHGTAYTVSVDAREGITTGISAADRATTMRLLADADAKADDLTRPGHVVPLRAKDGGVLRRPGHTEAAVDLARMAGLRPAGVICEIVSQKDEGHMARTEELRVFADDHDLALISIADMIAWRRKHEKQVVRVAEARIPTAHGAFTAVGYQSIYDDVEHVALVRGDIGDGEDVLVRVHSECLTGDVFGSLRCDCGPQLDAALEMVDQEGRGVVLYMRGHEGRGIGLMHKLQAYQLQDSGRDTVDANLDLGLPADARDYGTGAQILVDLGIRSMRLLTNNPAKRVGLDGYGLTITERVPMPLRANAENLRYLRTKRDRMGHDLVGLDDLDLGETAQ.

Residues 1 to 204 form a DHBP synthase region; that stretch reads MTRFDTIERA…IADMIAWRRK (204 aa). D-ribulose 5-phosphate contacts are provided by residues 28–29, D33, 141–145, and E165; these read RE and RPGHT. Residue E29 participates in Mg(2+) binding. H144 is a Mg(2+) binding site. A GTP cyclohydrolase II region spans residues 205–414; the sequence is HEKQVVRVAE…DDLDLGETAQ (210 aa). GTP is bound at residue 255–259; the sequence is RVHSE. 3 residues coordinate Zn(2+): C260, C271, and C273. GTP-binding positions include Q276, 299–301, and T321; that span reads EGR. D333 (proton acceptor; for GTP cyclohydrolase activity) is an active-site residue. R335 serves as the catalytic Nucleophile; for GTP cyclohydrolase activity. GTP-binding residues include T356 and K361.

The protein in the N-terminal section; belongs to the DHBP synthase family. This sequence in the C-terminal section; belongs to the GTP cyclohydrolase II family. Mg(2+) is required as a cofactor. It depends on Mn(2+) as a cofactor. The cofactor is Zn(2+).

The enzyme catalyses D-ribulose 5-phosphate = (2S)-2-hydroxy-3-oxobutyl phosphate + formate + H(+). It carries out the reaction GTP + 4 H2O = 2,5-diamino-6-hydroxy-4-(5-phosphoribosylamino)-pyrimidine + formate + 2 phosphate + 3 H(+). It participates in cofactor biosynthesis; riboflavin biosynthesis; 2-hydroxy-3-oxobutyl phosphate from D-ribulose 5-phosphate: step 1/1. Its pathway is cofactor biosynthesis; riboflavin biosynthesis; 5-amino-6-(D-ribitylamino)uracil from GTP: step 1/4. Catalyzes the conversion of D-ribulose 5-phosphate to formate and 3,4-dihydroxy-2-butanone 4-phosphate. In terms of biological role, catalyzes the conversion of GTP to 2,5-diamino-6-ribosylamino-4(3H)-pyrimidinone 5'-phosphate (DARP), formate and pyrophosphate. This Nocardia farcinica (strain IFM 10152) protein is Riboflavin biosynthesis protein RibBA.